The following is a 119-amino-acid chain: Non-specific lipid-transfer protein 3 (119 aa).

Residues 1-24 form the signal peptide; that stretch reads MARSMKLACVVLAMCMLVAPMAEA. Cystine bridges form between C28–C77, C38–C54, C55–C100, and C75–C114.

It belongs to the plant LTP family. In terms of tissue distribution, expressed in roots, stem, leaves and tendrils of the mature plant.

Plant non-specific lipid-transfer proteins transfer phospholipids as well as galactolipids across membranes. May play a role in wax or cutin deposition in the cell walls of expanding epidermal cells and certain secretory tissues. The polypeptide is Non-specific lipid-transfer protein 3 (Pisum sativum (Garden pea)).